Reading from the N-terminus, the 520-residue chain is GMP synthase [glutamine-hydrolyzing] (520 aa).

The 193-residue stretch at K13–D205 folds into the Glutamine amidotransferase type-1 domain. Catalysis depends on C90, which acts as the Nucleophile. Active-site residues include H179 and E181. A GMPS ATP-PPase domain is found at W206–R395. S233–S239 is a binding site for ATP.

In terms of assembly, homodimer.

It carries out the reaction XMP + L-glutamine + ATP + H2O = GMP + L-glutamate + AMP + diphosphate + 2 H(+). The protein operates within purine metabolism; GMP biosynthesis; GMP from XMP (L-Gln route): step 1/1. Its function is as follows. Catalyzes the synthesis of GMP from XMP. This chain is GMP synthase [glutamine-hydrolyzing], found in Streptococcus pneumoniae serotype 2 (strain D39 / NCTC 7466).